Reading from the N-terminus, the 249-residue chain is tRNA (guanine-N(1)-)-methyltransferase (249 aa).

S-adenosyl-L-methionine-binding positions include Gly-113 and 133–138 (IGDFVV).

This sequence belongs to the RNA methyltransferase TrmD family. As to quaternary structure, homodimer.

It localises to the cytoplasm. The enzyme catalyses guanosine(37) in tRNA + S-adenosyl-L-methionine = N(1)-methylguanosine(37) in tRNA + S-adenosyl-L-homocysteine + H(+). Specifically methylates guanosine-37 in various tRNAs. In Neisseria meningitidis serogroup C (strain 053442), this protein is tRNA (guanine-N(1)-)-methyltransferase.